A 501-amino-acid polypeptide reads, in one-letter code: Vitamin D 25-hydroxylase (501 aa).

Ala250 is a binding site for substrate. Residue Cys448 participates in heme binding.

It belongs to the cytochrome P450 family. In terms of assembly, homodimer. Requires heme as cofactor. As to expression, highly expressed in the liver and testis.

Its subcellular location is the endoplasmic reticulum membrane. The protein localises to the microsome membrane. The enzyme catalyses calciol + reduced [NADPH--hemoprotein reductase] + O2 = calcidiol + oxidized [NADPH--hemoprotein reductase] + H2O + H(+). It catalyses the reaction vitamin D2 + reduced [NADPH--hemoprotein reductase] + O2 = 25-hydroxyvitamin D2 + oxidized [NADPH--hemoprotein reductase] + H2O + H(+). It carries out the reaction 1alpha-hydroxyvitamin D2 + reduced [NADPH--hemoprotein reductase] + O2 = 1alpha,25-dihydroxyvitamin D2 + oxidized [NADPH--hemoprotein reductase] + H2O + H(+). The catalysed reaction is alfacalcidol + reduced [NADPH--hemoprotein reductase] + O2 = calcitriol + oxidized [NADPH--hemoprotein reductase] + H2O + H(+). It participates in hormone biosynthesis; vitamin D biosynthesis. Its function is as follows. A cytochrome P450 monooxygenase involved in activation of vitamin D precursors. Catalyzes hydroxylation at C-25 of both forms of vitamin D, vitamin D(2) and D(3) (calciol). Can metabolize vitamin D analogs/prodrugs 1alpha-hydroxyvitamin D(2) (doxercalciferol) and 1alpha-hydroxyvitamin D(3) (alfacalcidol) forming 25-hydroxy derivatives. Mechanistically, uses molecular oxygen inserting one oxygen atom into a substrate, and reducing the second into a water molecule, with two electrons provided by NADPH via cytochrome P450 reductase (CPR; NADPH-ferrihemoprotein reductase). The polypeptide is Vitamin D 25-hydroxylase (Cyp2r1) (Mus musculus (Mouse)).